A 202-amino-acid chain; its full sequence is Snake venom metalloproteinase fibrolase (202 aa).

The 197-residue stretch at 6–202 folds into the Peptidase M12B domain; that stretch reads RYIELVIVAD…HNPQCILNQP (197 aa). Glutamate 9 is a Ca(2+) binding site. Asparagine 25 is a glycosylation site (N-linked (GlcNAc...) asparagine). Residue aspartate 93 coordinates Ca(2+). 3 cysteine pairs are disulfide-bonded: cysteine 117–cysteine 197, cysteine 157–cysteine 181, and cysteine 159–cysteine 164. Histidine 142 is a binding site for Zn(2+). Glutamate 143 is a catalytic residue. Histidine 146 and histidine 152 together coordinate Zn(2+). Ca(2+)-binding residues include cysteine 197 and asparagine 200.

Belongs to the venom metalloproteinase (M12B) family. P-I subfamily. In terms of assembly, monomer. Zn(2+) serves as cofactor. Post-translationally, glycosylated. In terms of tissue distribution, expressed by the venom gland.

Its subcellular location is the secreted. The catalysed reaction is Hydrolysis of 14-Ala-|-Leu-15 in insulin B chain and 413-Lys-|-Leu-414 in alpha-chain of fibrinogen.. With respect to regulation, activated by calcium and magnesium ions. Inhibited by EDTA, DTT and L-cysteine. Activity is not affected by PMSF or heparin. In terms of biological role, has fibrino(geno)lytic activity on the alpha and beta chains of fibrinogen (FGA and FGB). Inhibits human ADP- and collagen-induced platelet aggregation on platelet-rich plasma but does not affect the thrombin-induced aggregation of rabbit washed platelets. Slightly degrades plasminogen. The sequence is that of Snake venom metalloproteinase fibrolase from Macrovipera lebetinus (Levantine viper).